Here is a 299-residue protein sequence, read N- to C-terminus: Ciliary microtubule inner protein 2B (299 aa).

It belongs to the CIMIP2 family. As to expression, expressed in airway epithelial cells.

It localises to the cytoplasm. It is found in the cytoskeleton. Its subcellular location is the cilium axoneme. In terms of biological role, microtubule inner protein (MIP) part of the dynein-decorated doublet microtubules (DMTs) in cilia axoneme, which is required for motile cilia beating. The chain is Ciliary microtubule inner protein 2B (cimip2b) from Danio rerio (Zebrafish).